Here is a 280-residue protein sequence, read N- to C-terminus: Shikimate dehydrogenase (NADP(+)) (280 aa).

Residues 20 to 22 (SLS) and T67 each bind shikimate. Residue K71 is the Proton acceptor of the active site. E83 is a binding site for NADP(+). The shikimate site is built by N92 and D107. NADP(+)-binding positions include 131–135 (GAGGA), 155–160 (NRTLNK), and L224. Position 226 (Y226) interacts with shikimate. G247 contacts NADP(+).

The protein belongs to the shikimate dehydrogenase family. Homodimer.

The catalysed reaction is shikimate + NADP(+) = 3-dehydroshikimate + NADPH + H(+). It functions in the pathway metabolic intermediate biosynthesis; chorismate biosynthesis; chorismate from D-erythrose 4-phosphate and phosphoenolpyruvate: step 4/7. Involved in the biosynthesis of the chorismate, which leads to the biosynthesis of aromatic amino acids. Catalyzes the reversible NADPH linked reduction of 3-dehydroshikimate (DHSA) to yield shikimate (SA). The sequence is that of Shikimate dehydrogenase (NADP(+)) from Caldanaerobacter subterraneus subsp. tengcongensis (strain DSM 15242 / JCM 11007 / NBRC 100824 / MB4) (Thermoanaerobacter tengcongensis).